The chain runs to 302 residues: MVEPVQEYRLVLVTGPSGAGRTTAINALEDMGYEVIDNLPLSFVPRLIEGPSIGRPIALGLDVRNRDFNATALIELIDRLTQDPRVALEVLYVDCSASELIRRYNQTRRRHPLAPAETPAEGVEREIDLLAPVRVRADHLIDTSEMSPHDLKAELSRWFDRGAATRLAVSVQSFSYKRGVPRGVDMIFDCRFLKNPYWVESLRTLDGREASVADYISSDPRFGPFFEKLRDLVLFLLPAQLEEGKAHLSLGFGCTGGQHRSVAVAELLGNALAEAGWPVSKRHRELERRAAAVLPTHQGEKA.

15 to 22 contacts ATP; it reads GPSGAGRT. 62–65 contacts GTP; the sequence is DVRN.

It belongs to the RapZ-like family.

Displays ATPase and GTPase activities. The chain is Nucleotide-binding protein Rsph17029_0317 from Cereibacter sphaeroides (strain ATCC 17029 / ATH 2.4.9) (Rhodobacter sphaeroides).